A 316-amino-acid polypeptide reads, in one-letter code: Mitochondrial GTPase 1 (316 aa).

In terms of domain architecture, CP-type G spans 28–203 (MKQMQQKLKQ…LLDTPGILKP (176 aa)). GTP-binding positions include 73-76 (NKKD), 147-152 (NVGKSS), and Gly199.

This sequence belongs to the TRAFAC class YlqF/YawG GTPase family. MTG1 subfamily.

It localises to the mitochondrion inner membrane. Plays a role in the regulation of the mitochondrial ribosome assembly and of translational activity. Displays mitochondrial GTPase activity. In Aedes aegypti (Yellowfever mosquito), this protein is Mitochondrial GTPase 1.